The following is a 90-amino-acid chain: UPF0213 protein lin0209 (90 aa).

Residues 5 to 80 enclose the GIY-YIG domain; sequence NEHFFYVLKC…KKLSRKNKDS (76 aa).

The protein belongs to the UPF0213 family.

This is UPF0213 protein lin0209 from Listeria innocua serovar 6a (strain ATCC BAA-680 / CLIP 11262).